Here is a 393-residue protein sequence, read N- to C-terminus: GDP-mannose:cellobiosyl-diphosphopolyprenol alpha-mannosyltransferase (393 aa).

It belongs to the glycosyltransferase group 1 family. Glycosyltransferase 4 subfamily.

The catalysed reaction is beta-D-Glc-(1-&gt;4)-alpha-D-Glc-di-trans,octa-cis-undecaprenyl diphosphate + GDP-alpha-D-mannose = alpha-D-Man-(1-&gt;3)-beta-D-Glc-(1-&gt;4)-alpha-D-Glc-1-di-trans,octa-cis-undecaprenyl diphosphate + GDP + H(+). Its function is as follows. Involved in the biosynthesis of the exopolysaccharide acetan, a water-soluble polysaccharide involved in production of bacterial cellulose (BC). The sequence is that of GDP-mannose:cellobiosyl-diphosphopolyprenol alpha-mannosyltransferase (aceC) from Komagataeibacter xylinus (Gluconacetobacter xylinus).